The following is a 143-amino-acid chain: Large ribosomal subunit protein uL15 (143 aa).

The disordered stretch occupies residues 1–52 (MELNTIQPADGAKHYKRRVGRGIGSGLGKTAGRGHKGQKSRSGGFHKVGFEG). Residues 21–31 (RGIGSGLGKTA) are compositionally biased toward gly residues.

The protein belongs to the universal ribosomal protein uL15 family. As to quaternary structure, part of the 50S ribosomal subunit.

Its function is as follows. Binds to the 23S rRNA. The chain is Large ribosomal subunit protein uL15 from Herminiimonas arsenicoxydans.